The following is a 313-amino-acid chain: Ornithine carbamoyltransferase (313 aa).

Carbamoyl phosphate is bound by residues 57–60 (STRT), R108, and 135–138 (HPTQ). Residues N167, D231, and 235-236 (SM) contribute to the L-ornithine site. Carbamoyl phosphate-binding positions include 272–273 (CL) and R300.

The protein belongs to the aspartate/ornithine carbamoyltransferase superfamily. OTCase family.

The protein localises to the cytoplasm. The catalysed reaction is carbamoyl phosphate + L-ornithine = L-citrulline + phosphate + H(+). Its pathway is amino-acid biosynthesis; L-arginine biosynthesis; L-arginine from L-ornithine and carbamoyl phosphate: step 1/3. In terms of biological role, reversibly catalyzes the transfer of the carbamoyl group from carbamoyl phosphate (CP) to the N(epsilon) atom of ornithine (ORN) to produce L-citrulline. In Thermotoga petrophila (strain ATCC BAA-488 / DSM 13995 / JCM 10881 / RKU-1), this protein is Ornithine carbamoyltransferase.